Here is a 251-residue protein sequence, read N- to C-terminus: uncharacterized protein (251 aa).

A disordered region spans residues 207–251; the sequence is ATPHSKRGRTKLYRKEPPGDNRSPPPWQEPHGEGLAEKLSPGPAR.

This is an uncharacterized protein from Treponema pallidum (strain Nichols).